We begin with the raw amino-acid sequence, 303 residues long: Oxygen-dependent coproporphyrinogen-III oxidase (303 aa).

A substrate-binding site is contributed by S93. A divalent metal cation-binding residues include H97 and H107. The Proton donor role is filled by H107. 109 to 111 is a binding site for substrate; sequence NVR. Residues H146 and H176 each contribute to the a divalent metal cation site. The tract at residues 241-276 is important for dimerization; sequence YVEFNLVYDRGTLFGLQSGGRTESILMSLPPQVRWG. 259–261 contacts substrate; that stretch reads GGR.

It belongs to the aerobic coproporphyrinogen-III oxidase family. As to quaternary structure, homodimer. The cofactor is a divalent metal cation.

It is found in the cytoplasm. The catalysed reaction is coproporphyrinogen III + O2 + 2 H(+) = protoporphyrinogen IX + 2 CO2 + 2 H2O. It functions in the pathway porphyrin-containing compound metabolism; protoporphyrin-IX biosynthesis; protoporphyrinogen-IX from coproporphyrinogen-III (O2 route): step 1/1. Its function is as follows. Involved in the heme biosynthesis. Catalyzes the aerobic oxidative decarboxylation of propionate groups of rings A and B of coproporphyrinogen-III to yield the vinyl groups in protoporphyrinogen-IX. The protein is Oxygen-dependent coproporphyrinogen-III oxidase of Pseudomonas putida (strain ATCC 700007 / DSM 6899 / JCM 31910 / BCRC 17059 / LMG 24140 / F1).